A 133-amino-acid polypeptide reads, in one-letter code: MDKLEKSLDVWRELLSDERFRICRLGGTERAFSGEYYATSVPGVYHCACCDAPLFDSDAKYDAGCGWPSYFQPVAASALTSRDDYSHGMHRIEVLCARCDAHLGHVFPDGPPPTGLRYCINSASLRLKPRDEG.

The MsrB domain occupies 8–130 (LDVWRELLSD…NSASLRLKPR (123 aa)). The Zn(2+) site is built by C47, C50, C96, and C99. The Nucleophile role is filled by C119.

It belongs to the MsrB Met sulfoxide reductase family. Requires Zn(2+) as cofactor.

The enzyme catalyses L-methionyl-[protein] + [thioredoxin]-disulfide + H2O = L-methionyl-(R)-S-oxide-[protein] + [thioredoxin]-dithiol. The chain is Peptide methionine sulfoxide reductase MsrB from Azotobacter vinelandii (strain DJ / ATCC BAA-1303).